Consider the following 439-residue polypeptide: MSQAKSNKMGVVQLTILTMVNMMGSGIIMLPTKLAEVGTISIISWLVTAVGSMALAWAFAKCGMFSRKSGGMGGYAEYAFGKSGNFMANYTYGVSLLIANVAIAISAVGYGTELLGASLSPVQIGLATIGVLWICTVANFGGARITGQISSITVWGVIIPVVGLCIIGWFWFSPTLYVDSWNPHHAPFFSAVGSSIAMTLWAFLGLESACANTDVVENPERNVPIAVLGGTLGAAVIYIVSTNVIAGIVPNMELANSTAPFGLAFAQMFTPEVGKVIMALMVMSCCGSLLGWQFTIAQVFKSSSDEGYFPKIFSRVTKVDAPVQGMLTIVIIQSGLALMTISPSLNSQFNVLVNLAVVTNIIPYILSMAALVIIQKVANVPPSKAKVANFVAFVGAMYSFYALYSSGEEAMLYGSIVTFLGWTLYGLVSPRFELKNKHG.

12 helical membrane passes run 10 to 30 (GVVQ…IIML), 40 to 60 (ISII…WAFA), 91 to 111 (TYGV…VGYG), 114 to 134 (LLGA…VLWI), 152 to 172 (ITVW…WFWF), 186 to 206 (APFF…FLGL), 225 to 245 (IAVL…TNVI), 276 to 296 (VIMA…QFTI), 321 to 341 (APVQ…LMTI), 354 to 374 (NLAV…LVII), 387 to 407 (VANF…YSSG), and 410 to 430 (AMLY…LVSP).

Belongs to the amino acid-polyamine-organocation (APC) superfamily. Basic amino acid/polyamine antiporter (APA) (TC 2.A.3.2) family.

The protein localises to the cell inner membrane. It catalyses the reaction putrescine(in) + H(+)(in) = putrescine(out) + H(+)(out). The catalysed reaction is putrescine(in) + L-ornithine(out) = putrescine(out) + L-ornithine(in). In terms of biological role, catalyzes both the uptake and excretion of putrescine. The uptake of putrescine is dependent on the membrane potential and the excretion involves putrescine-ornithine antiporter activity. The polypeptide is Putrescine transporter PotE (Escherichia coli O6:H1 (strain CFT073 / ATCC 700928 / UPEC)).